The chain runs to 455 residues: L-serine dehydratase (455 aa).

Belongs to the iron-sulfur dependent L-serine dehydratase family. Requires [4Fe-4S] cluster as cofactor.

It catalyses the reaction L-serine = pyruvate + NH4(+). Its pathway is carbohydrate biosynthesis; gluconeogenesis. The polypeptide is L-serine dehydratase (sdaA) (Helicobacter pylori (strain J99 / ATCC 700824) (Campylobacter pylori J99)).